A 113-amino-acid chain; its full sequence is Large ribosomal subunit protein uL22 (113 aa).

This sequence belongs to the universal ribosomal protein uL22 family. Part of the 50S ribosomal subunit.

This protein binds specifically to 23S rRNA; its binding is stimulated by other ribosomal proteins, e.g. L4, L17, and L20. It is important during the early stages of 50S assembly. It makes multiple contacts with different domains of the 23S rRNA in the assembled 50S subunit and ribosome. Functionally, the globular domain of the protein is located near the polypeptide exit tunnel on the outside of the subunit, while an extended beta-hairpin is found that lines the wall of the exit tunnel in the center of the 70S ribosome. This Thermus thermophilus (strain ATCC BAA-163 / DSM 7039 / HB27) protein is Large ribosomal subunit protein uL22.